The chain runs to 37 residues: Large ribosomal subunit protein bL36 (37 aa).

This sequence belongs to the bacterial ribosomal protein bL36 family.

The sequence is that of Large ribosomal subunit protein bL36 from Nitratidesulfovibrio vulgaris (strain DSM 19637 / Miyazaki F) (Desulfovibrio vulgaris).